Reading from the N-terminus, the 210-residue chain is uncharacterized protein (210 aa).

Positions 1–20 (MRVITLSGITLFLLASLASA) are cleaved as a signal peptide. The Lumenal portion of the chain corresponds to 21–175 (IELTFKLENQ…YSTVKSTQAR (155 aa)). The 84-residue stretch at 32–115 (KQCYYLDSFH…DKIVTMEITM (84 aa)) folds into the GOLD domain. N-linked (GlcNAc...) asparagine glycosylation occurs at N165. Residues 176–196 (IFWFSLAESIMVVALSALQVF) traverse the membrane as a helical segment. Over 197–210 (IVKTFFKRSGRRGV) the chain is Cytoplasmic.

The protein belongs to the EMP24/GP25L family.

The protein localises to the endoplasmic reticulum membrane. This is an uncharacterized protein from Schizosaccharomyces pombe (strain 972 / ATCC 24843) (Fission yeast).